We begin with the raw amino-acid sequence, 884 residues long: Probable LRR receptor-like serine/threonine-protein kinase PAM74 (884 aa).

The N-terminal stretch at 1–23 (MDSPCWLLLLLLGAFAIIGCVQA) is a signal peptide. Over 24-510 (QDQQEFISLD…TEKNSKKKFP (487 aa)) the chain is Extracellular. N-linked (GlcNAc...) asparagine glycosylation is found at Asn-143, Asn-182, Asn-200, Asn-256, Asn-289, Asn-400, Asn-403, Asn-417, Asn-433, Asn-444, Asn-465, and Asn-470. 3 LRR repeats span residues 412–433 (RVLS…AIQN), 436–457 (HLEK…FLAQ), and 460–480 (SLVI…QGLR). The chain crosses the membrane as a helical span at residues 511-531 (VVIVASVASVAIIVAVLVIIF). The Cytoplasmic segment spans residues 532–884 (VLSKKKSSTV…FDTELFPRAR (353 aa)). Thr-570 bears the Phosphothreonine mark. In terms of domain architecture, Protein kinase spans 579–852 (NNFQRVVGEG…QVANELKECL (274 aa)). ATP-binding positions include 585–593 (VGEGGFGVV) and Lys-607. Tyr-652 is subject to Phosphotyrosine. Catalysis depends on Asp-704, which acts as the Proton acceptor. Phosphoserine is present on Ser-738. Residues Thr-739 and Thr-744 each carry the phosphothreonine modification. Tyr-752 carries the phosphotyrosine modification.

It belongs to the protein kinase superfamily. Ser/Thr protein kinase family. Binds to the ammonium transporter AMT1-1.

The protein localises to the membrane. It catalyses the reaction L-seryl-[protein] + ATP = O-phospho-L-seryl-[protein] + ADP + H(+). It carries out the reaction L-threonyl-[protein] + ATP = O-phospho-L-threonyl-[protein] + ADP + H(+). Functionally, required for accurate photosynthesis. The chain is Probable LRR receptor-like serine/threonine-protein kinase PAM74 (PAM74) from Arabidopsis thaliana (Mouse-ear cress).